Reading from the N-terminus, the 466-residue chain is Ribulose bisphosphate carboxylase large chain (466 aa).

Lysine 5 bears the N6,N6,N6-trimethyllysine mark. Substrate is bound by residues asparagine 114 and threonine 164. Residue lysine 166 is the Proton acceptor of the active site. Residue lysine 168 coordinates substrate. Positions 192, 194, and 195 each coordinate Mg(2+). Position 192 is an N6-carboxylysine (lysine 192). The active-site Proton acceptor is the histidine 285. Residues arginine 286, histidine 318, and serine 370 each coordinate substrate.

This sequence belongs to the RuBisCO large chain family. Type I subfamily. In terms of assembly, heterohexadecamer of 8 large chains and 8 small chains; disulfide-linked. The disulfide link is formed within the large subunit homodimers. The cofactor is Mg(2+). The disulfide bond which can form in the large chain dimeric partners within the hexadecamer appears to be associated with oxidative stress and protein turnover.

It localises to the plastid. The protein localises to the chloroplast. It carries out the reaction 2 (2R)-3-phosphoglycerate + 2 H(+) = D-ribulose 1,5-bisphosphate + CO2 + H2O. It catalyses the reaction D-ribulose 1,5-bisphosphate + O2 = 2-phosphoglycolate + (2R)-3-phosphoglycerate + 2 H(+). In terms of biological role, ruBisCO catalyzes two reactions: the carboxylation of D-ribulose 1,5-bisphosphate, the primary event in carbon dioxide fixation, as well as the oxidative fragmentation of the pentose substrate in the photorespiration process. Both reactions occur simultaneously and in competition at the same active site. The protein is Ribulose bisphosphate carboxylase large chain of Poliothyrsis sinensis (Chinese pearlbloom tree).